The following is a 336-amino-acid chain: Glutamyl endopeptidase (336 aa).

Positions 1 to 29 (MKGKFLKVSSLFVATLTTATLVSSPAANA) are cleaved as a signal peptide. The propeptide occupies 30–68 (LSSKAMDNHPQQTQSSKQQTPKIQKGGNLKPLEQREHAN). The interval 34 to 61 (AMDNHPQQTQSSKQQTPKIQKGGNLKPL) is disordered. Positions 39 to 51 (PQQTQSSKQQTPK) are enriched in low complexity. Catalysis depends on charge relay system residues histidine 119, aspartate 161, and serine 237. Positions 283 to 336 (FANDDQPNNPDNPDNPNNPDNPNNPDEPNNPDNPNNPDNPDNGDTNNSDNPDAA) are disordered. Positions 286-336 (DDQPNNPDNPDNPNNPDNPNNPDEPNNPDNPNNPDNPDNGDTNNSDNPDAA) are enriched in low complexity. Tandem repeats lie at residues 289-291 (PNN), 292-294 (PDN), 295-297 (PDN), 298-300 (PNN), 301-303 (PDN), 304-306 (PNN), 310-312 (PNN), 313-315 (PDN), 316-318 (PNN), 319-321 (PDN), and 322-324 (PDN). The tract at residues 289 to 324 (PNNPDNPDNPNNPDNPNNPDEPNNPDNPNNPDNPDN) is 11 X 3 AA repeats of P-[DN]-N.

This sequence belongs to the peptidase S1B family. Proteolytically cleaved by aureolysin (aur). This cleavage leads to the activation of SspA.

The protein resides in the secreted. It catalyses the reaction Preferential cleavage: Glu-|-Xaa, Asp-|-Xaa.. In terms of biological role, preferentially cleaves peptide bonds on the carboxyl-terminal side of aspartate and glutamate. Along with other extracellular proteases it is involved in colonization and infection of human tissues. Required for proteolytic maturation of thiol protease SspB and inactivation of SspC, an inhibitor of SspB. It is the most important protease for degradation of fibronectin-binding protein (FnBP) and surface protein A, which are involved in adherence to host cells. May also protect bacteria against host defense mechanism by cleaving the immunoglobulin classes IgG, IgA and IgM. May be involved in the stability of secreted lipases. The chain is Glutamyl endopeptidase (sspA) from Staphylococcus aureus (strain COL).